We begin with the raw amino-acid sequence, 402 residues long: Putative epoxide hydrolase AFT8 (402 aa).

It belongs to the peptidase S33 family.

It functions in the pathway mycotoxin biosynthesis. In terms of biological role, putative epoxide hydrolase; part of the gene clusters that mediate the biosynthesis of the host-selective toxins (HSTs) AF-toxins responsible for Alternaria black spot of strawberry disease by the strawberry pathotype. AF-toxin I and III are valine derivatives of 2,3-dyhydroxy-isovaleric acid and 2-hydroxy-isovaleric acid respectively, while AF II is an isoleucine derivative of 2-hydroxy-valeric acid. These derivatives are bound to a 9,10-epoxy-8-hydroxy-9-methyl-decatrienoic acid (EDA) moiety. On cellular level, AF-toxins affect plasma membrane of susceptible cells and cause a sudden increase in loss of K(+) after a few minutes of toxin treatment. The aldo-keto reductase AFTS1 catalyzes the conversion of 2-keto-isovaleric acid (2-KIV) to 2-hydroxy-isovaleric acid (2-HIV) by reduction of its ketone to an alcohol. The acyl-CoA ligase AFT1, the hydrolase AFT2 and the enoyl-CoA hydratases AFT3 and AFT6, but also the polyketide synthase AFT9, the acyl-CoA dehydrogenase AFT10, the cytochrome P450 monooxygenase AFT11 and the oxidoreductase AFT12 are all involved in the biosynthesis of the AK-, AF- and ACT-toxin common EDA structural moiety. The exact function of each enzyme, and of additional enzymes identified within the AF-toxin clusters have still to be determined. The protein is Putative epoxide hydrolase AFT8 of Alternaria alternata (Alternaria rot fungus).